The chain runs to 410 residues: E3 ubiquitin-protein ligase MARCHF4 (410 aa).

The N-terminal stretch at 1–18 (MLMPLCGLLWWWWCCCSG) is a signal peptide. A disordered region spans residues 92–136 (GPREVVGREPPPVPPPPPLPPSSVEDDWGGPATEPPASLLSSASS). Pro residues predominate over residues 100-112 (EPPPVPPPPPLPP). Over residues 126-136 (PPASLLSSASS) the composition is skewed to low complexity. An RING-CH-type zinc finger spans residues 155–215 (DSGMRTPLCR…ELCYYKYHVI (61 aa)). Zn(2+) contacts are provided by cysteine 163, cysteine 166, cysteine 179, cysteine 181, histidine 189, cysteine 192, cysteine 205, and cysteine 208. 2 helical membrane-spanning segments follow: residues 238-258 (VAAAILGSLFLIASISWLIWS) and 272-292 (LFQICYGMYGFMDVVCIGLII). Disordered stretches follow at residues 324–372 (EDQK…SGPL) and 390–410 (PHEQRSPPGSSRELVMRVTTV). Residues 333–346 (NPRTSSSTQANIPS) are compositionally biased toward polar residues. The span at 352–366 (AGTPAPEQGPAQAAG) shows a compositional bias: low complexity.

Expressed in brain and placenta.

It localises to the golgi apparatus membrane. It carries out the reaction S-ubiquitinyl-[E2 ubiquitin-conjugating enzyme]-L-cysteine + [acceptor protein]-L-lysine = [E2 ubiquitin-conjugating enzyme]-L-cysteine + N(6)-ubiquitinyl-[acceptor protein]-L-lysine.. The protein operates within protein modification; protein ubiquitination. In terms of biological role, E3 ubiquitin-protein ligase that may mediate ubiquitination of MHC-I and CD4, and promote their subsequent endocytosis and sorting to lysosomes via multivesicular bodies. E3 ubiquitin ligases accept ubiquitin from an E2 ubiquitin-conjugating enzyme in the form of a thioester and then directly transfer the ubiquitin to targeted substrates. The polypeptide is E3 ubiquitin-protein ligase MARCHF4 (Homo sapiens (Human)).